A 208-amino-acid polypeptide reads, in one-letter code: LexA repressor (208 aa).

The segment at residues 28–48 (RAEIARQLGFRSANAAEEHLK) is a DNA-binding region (H-T-H motif). Residues Ser-125 and Lys-162 each act as for autocatalytic cleavage activity in the active site.

Belongs to the peptidase S24 family. Homodimer.

The enzyme catalyses Hydrolysis of Ala-|-Gly bond in repressor LexA.. Functionally, represses a number of genes involved in the response to DNA damage (SOS response), including recA and lexA. In the presence of single-stranded DNA, RecA interacts with LexA causing an autocatalytic cleavage which disrupts the DNA-binding part of LexA, leading to derepression of the SOS regulon and eventually DNA repair. This is LexA repressor from Alteromonas mediterranea (strain DSM 17117 / CIP 110805 / LMG 28347 / Deep ecotype).